Consider the following 324-residue polypeptide: CIMIP2 protein GA14893 (324 aa).

It belongs to the CIMIP2 family.

It is found in the cytoplasm. Its subcellular location is the cytoskeleton. The protein localises to the cilium axoneme. Functionally, probable microtubule inner protein (MIP) part of the dynein-decorated doublet microtubules (DMTs) in cilium axoneme. The chain is CIMIP2 protein GA14893 from Drosophila pseudoobscura pseudoobscura (Fruit fly).